The sequence spans 680 residues: Epithelial splicing regulatory protein 1 (680 aa).

RRM domains lie at 224 to 301 (TVVR…KATG), 325 to 405 (VIVR…RSTA), and 444 to 524 (DCIR…QCSA). At Ser-542 the chain carries Phosphoserine. The residue at position 581 (Arg-581) is an Omega-N-methylarginine.

Belongs to the ESRP family. In terms of tissue distribution, epithelial cell-specific. Epithelial-specific expression in diverse tissues and organs with particularly notable levels of expression in skin and gastrointestinal epithelia.

It localises to the nucleus. Its function is as follows. mRNA splicing factor that regulates the formation of epithelial cell-specific isoforms. Specifically regulates the expression of FGFR2-IIIb, an epithelial cell-specific isoform of FGFR2. Also regulates the splicing of CD44, CTNND1, ENAH, 3 transcripts that undergo changes in splicing during the epithelial-to-mesenchymal transition (EMT). Acts by directly binding specific sequences in mRNAs. Binds the GU-rich sequence motifs in the ISE/ISS-3, a cis-element regulatory region present in the mRNA of FGFR2. Regulates splicing and expression of genes involved in inner ear development, auditory hair cell differentiation, and cell fate specification in the cochlear epithelium. The chain is Epithelial splicing regulatory protein 1 (Esrp1) from Mus musculus (Mouse).